Consider the following 379-residue polypeptide: Cobalt-precorrin-5B C(1)-methyltransferase (379 aa).

Belongs to the CbiD family.

It carries out the reaction Co-precorrin-5B + S-adenosyl-L-methionine = Co-precorrin-6A + S-adenosyl-L-homocysteine. Its pathway is cofactor biosynthesis; adenosylcobalamin biosynthesis; cob(II)yrinate a,c-diamide from sirohydrochlorin (anaerobic route): step 6/10. In terms of biological role, catalyzes the methylation of C-1 in cobalt-precorrin-5B to form cobalt-precorrin-6A. The sequence is that of Cobalt-precorrin-5B C(1)-methyltransferase from Salmonella typhi.